Consider the following 178-residue polypeptide: Large ribosomal subunit protein uL6 (178 aa).

It belongs to the universal ribosomal protein uL6 family. Part of the 50S ribosomal subunit.

Functionally, this protein binds to the 23S rRNA, and is important in its secondary structure. It is located near the subunit interface in the base of the L7/L12 stalk, and near the tRNA binding site of the peptidyltransferase center. This chain is Large ribosomal subunit protein uL6, found in Campylobacter jejuni subsp. jejuni serotype O:2 (strain ATCC 700819 / NCTC 11168).